Here is a 373-residue protein sequence, read N- to C-terminus: Chaperone protein DnaJ (373 aa).

Residues 5 to 70 (DYYEVLGLQK…EKKSNYDQFG (66 aa)) form the J domain. The segment at 132–214 (GVEKEITVNR…CRGNGNVRKT (83 aa)) adopts a CR-type zinc-finger fold. Positions 145, 148, 162, 165, 188, 191, 202, and 205 each coordinate Zn(2+). CXXCXGXG motif repeat units lie at residues 145 to 152 (CEHCNGSG), 162 to 169 (CPTCSGTG), 188 to 195 (CDRCSGTG), and 202 to 209 (CTHCRGNG).

It belongs to the DnaJ family. As to quaternary structure, homodimer. Requires Zn(2+) as cofactor.

It localises to the cytoplasm. In terms of biological role, participates actively in the response to hyperosmotic and heat shock by preventing the aggregation of stress-denatured proteins and by disaggregating proteins, also in an autonomous, DnaK-independent fashion. Unfolded proteins bind initially to DnaJ; upon interaction with the DnaJ-bound protein, DnaK hydrolyzes its bound ATP, resulting in the formation of a stable complex. GrpE releases ADP from DnaK; ATP binding to DnaK triggers the release of the substrate protein, thus completing the reaction cycle. Several rounds of ATP-dependent interactions between DnaJ, DnaK and GrpE are required for fully efficient folding. Also involved, together with DnaK and GrpE, in the DNA replication of plasmids through activation of initiation proteins. This is Chaperone protein DnaJ from Clostridium botulinum (strain Eklund 17B / Type B).